A 221-amino-acid polypeptide reads, in one-letter code: Zingipain-1 (221 aa).

Cystine bridges form between Cys-24/Cys-65, Cys-58/Cys-98, and Cys-155/Cys-206. Residue Cys-27 is part of the active site. N-linked (GlcNAc...) asparagine glycans are attached at residues Asn-95 and Asn-156. Residues His-161 and Asn-181 contribute to the active site.

This sequence belongs to the peptidase C1 family.

The catalysed reaction is Preferential cleavage of peptides with a proline residue at the P2 position.. Its function is as follows. Cysteine proteinase with a high level of diversity in substrate specificity, an amino acid bearing a proline residue at the P2 position is preferred. The chain is Zingipain-1 from Zingiber officinale (Ginger).